Here is a 353-residue protein sequence, read N- to C-terminus: Photosystem II protein D1 (353 aa).

N-acetylthreonine is present on T2. The residue at position 2 (T2) is a Phosphothreonine. 3 helical membrane-spanning segments follow: residues 29-46 (YIGW…TATS), 118-133 (HFLL…EWEL), and 142-156 (WIAV…AATA). Position 118 (H118) interacts with chlorophyll a. Residue Y126 coordinates pheophytin a. [CaMn4O5] cluster is bound by residues D170 and E189. A helical membrane pass occupies residues 197–218 (FHMLGVAGVFGGSLFSAMHGSL). Chlorophyll a is bound at residue H198. Residues H215 and 264–265 (SF) contribute to the a quinone site. H215 is a binding site for Fe cation. A Fe cation-binding site is contributed by H272. A helical membrane pass occupies residues 274-288 (FLAAWPVVGIWFTAL). [CaMn4O5] cluster-binding residues include H332, E333, D342, and A344. The propeptide occupies 345-353 (AVEVPSING).

The protein belongs to the reaction center PufL/M/PsbA/D family. As to quaternary structure, PSII is composed of 1 copy each of membrane proteins PsbA, PsbB, PsbC, PsbD, PsbE, PsbF, PsbH, PsbI, PsbJ, PsbK, PsbL, PsbM, PsbT, PsbX, PsbY, PsbZ, Psb30/Ycf12, at least 3 peripheral proteins of the oxygen-evolving complex and a large number of cofactors. It forms dimeric complexes. The D1/D2 heterodimer binds P680, chlorophylls that are the primary electron donor of PSII, and subsequent electron acceptors. It shares a non-heme iron and each subunit binds pheophytin, quinone, additional chlorophylls, carotenoids and lipids. D1 provides most of the ligands for the Mn4-Ca-O5 cluster of the oxygen-evolving complex (OEC). There is also a Cl(-1) ion associated with D1 and D2, which is required for oxygen evolution. The PSII complex binds additional chlorophylls, carotenoids and specific lipids. is required as a cofactor. In terms of processing, tyr-161 forms a radical intermediate that is referred to as redox-active TyrZ, YZ or Y-Z. Post-translationally, C-terminally processed by CTPA; processing is essential to allow assembly of the oxygen-evolving complex and thus photosynthetic growth.

The protein localises to the plastid. It localises to the chloroplast thylakoid membrane. It catalyses the reaction 2 a plastoquinone + 4 hnu + 2 H2O = 2 a plastoquinol + O2. Photosystem II (PSII) is a light-driven water:plastoquinone oxidoreductase that uses light energy to abstract electrons from H(2)O, generating O(2) and a proton gradient subsequently used for ATP formation. It consists of a core antenna complex that captures photons, and an electron transfer chain that converts photonic excitation into a charge separation. The D1/D2 (PsbA/PsbD) reaction center heterodimer binds P680, the primary electron donor of PSII as well as several subsequent electron acceptors. In Triticum aestivum (Wheat), this protein is Photosystem II protein D1.